A 76-amino-acid polypeptide reads, in one-letter code: Exodeoxyribonuclease 7 small subunit (76 aa).

This sequence belongs to the XseB family. Heterooligomer composed of large and small subunits.

The protein resides in the cytoplasm. It catalyses the reaction Exonucleolytic cleavage in either 5'- to 3'- or 3'- to 5'-direction to yield nucleoside 5'-phosphates.. Bidirectionally degrades single-stranded DNA into large acid-insoluble oligonucleotides, which are then degraded further into small acid-soluble oligonucleotides. The polypeptide is Exodeoxyribonuclease 7 small subunit (Latilactobacillus sakei subsp. sakei (strain 23K) (Lactobacillus sakei subsp. sakei)).